We begin with the raw amino-acid sequence, 438 residues long: MSVTKVHARTVYDSRGNPTVEVEVYTKDGMFRAIVPSGASTGSHEALELRDGDKSKWEGKGVTKAVSNVNDIIGPKLIESKLDVKDQKAIDEFMIKLDGTKNKSKLGANAILGVSLAVARAGAAAKGVPLYQHIAELADMKKEPYVIPCPFFNVLNGGVHAGGNLALQEFLIAPVGAESFHEALRLGSEVYHKLKALAKKRIGSSAGNVGDEGGIAPSLSTPFEALDLIYDAIKEAGHEGKVKIAMDPASSEFFQGDKYDLDFKNPHPDAKNKLSGAQLGDYYKTILEKYPIVSLEDPFAEDDWEAWTNFFPKAGVQIIADDLTVTNPERIQTAIDKKTADCLLLKVNQIGSLTESINSAKLAYGAGWGVQVSHRSGETEDTFIADLVVGLRTGQIKSGSLARSERLAKWNQILRIEEELGASNTIFAGAKFHKGQLL.

Residues His160 and Glu169 each coordinate substrate. The Proton donor role is filled by Glu212. Mg(2+)-binding residues include Asp247, Glu296, and Asp321. Residues Glu296 and Asp321 each contribute to the substrate site. The active-site Proton acceptor is Lys346. Substrate-binding positions include 373–376 and Lys397; that span reads SHRS.

The protein belongs to the enolase family. As to quaternary structure, homodimer. It depends on Mg(2+) as a cofactor.

The protein resides in the cytoplasm. The catalysed reaction is (2R)-2-phosphoglycerate = phosphoenolpyruvate + H2O. Its pathway is carbohydrate degradation; glycolysis; pyruvate from D-glyceraldehyde 3-phosphate: step 4/5. This is Enolase 1 (ENO1) from Candida glabrata (strain ATCC 2001 / BCRC 20586 / JCM 3761 / NBRC 0622 / NRRL Y-65 / CBS 138) (Yeast).